Consider the following 1434-residue polypeptide: Pleiotropic drug resistance protein 1 (1434 aa).

A disordered region spans residues 1–22 (MEPANLSNLRGSSLRGSTRGSL). The ABC transporter 1 domain maps to 161–434 (LNSLHILSSR…FESMGFKCPQ (274 aa)). ATP is bound at residue 194–201 (GPPSSGKT). In terms of domain architecture, ABC transmembrane type-2 1 spans 512-725 (ELLKVCTERE…SVNSILVNEF (214 aa)). 7 helical membrane passes run 530 to 550 (FVYM…MTLF), 563 to 583 (GGIY…NGMS), 618 to 638 (IPVT…VIGF), 649 to 669 (FLLL…IGAV), 675 to 695 (VAST…GFVL), 702 to 722 (SWWI…SILV), and 760 to 780 (IGVG…SLAL). The tract at residues 793–824 (LPEDGENAENGEVSSQITSTDGGDSISESQNN) is disordered. The segment covering 804-824 (EVSSQITSTDGGDSISESQNN) has biased composition (polar residues). An ABC transporter 2 domain is found at 837 to 1089 (ITFDDVVYSV…HLIKYFESNP (253 aa)). 882-889 (GVSGAGKT) serves as a coordination point for ATP. The 215-residue stretch at 1162 to 1376 (TQCVACLWKQ…TLYGLVASQF (215 aa)) folds into the ABC transmembrane type-2 2 domain. Helical transmembrane passes span 1181-1201 (YTAV…TMFW), 1221-1241 (YAAV…VVAI), 1269-1289 (IPYI…MIGF), 1296-1316 (FFWY…YGMM), 1326-1346 (VASI…GFII), 1357-1377 (WYYW…SQFG), and 1406-1426 (VVAA…AFAI).

This sequence belongs to the ABC transporter superfamily. ABCG family. PDR (TC 3.A.1.205) subfamily.

Its subcellular location is the membrane. In terms of biological role, may be a general defense protein. This chain is Pleiotropic drug resistance protein 1 (PDR1), found in Nicotiana tabacum (Common tobacco).